We begin with the raw amino-acid sequence, 270 residues long: Putative postmeiotic segregation increased 2-like protein 11 (270 aa).

This sequence belongs to the DNA mismatch repair MutL/HexB family.

In Homo sapiens (Human), this protein is Putative postmeiotic segregation increased 2-like protein 11 (PMS2P11).